The sequence spans 708 residues: Protein MICRORCHIDIA 5 (708 aa).

Residues 1-11 (MAESGSTNPKS) are compositionally biased toward polar residues. The interval 1-47 (MAESGSTNPKSPSVVPDSTLGGLKRDLRNYHDGDDSNNLSIKKSKTT) is disordered. Positions 23–34 (LKRDLRNYHDGD) are enriched in basic and acidic residues. Positions 590–665 (SVNLEAELQK…LENRQEGVST (76 aa)) form a coiled coil. A Nuclear localization signal motif is present at residues 672-679 (ARRDVTED).

This sequence belongs to the MORC ATPase protein family. Homodimer and heterodimer. Component of an RNA-directed DNA methylation (RdDM) complex. Mg(2+) serves as cofactor. Mn(2+) is required as a cofactor.

Its subcellular location is the nucleus. Exhibits ATPase activity. Binds DNA/RNA in a non-specific manner and exhibits endonuclease activity. Probably involved in DNA repair. Involved in RNA-directed DNA methylation (RdDM) as a component of the RdDM machinery and required for gene silencing. May also be involved in the regulation of chromatin architecture to maintain gene silencing. This is Protein MICRORCHIDIA 5 from Arabidopsis thaliana (Mouse-ear cress).